The primary structure comprises 438 residues: V-type ATP synthase beta chain (438 aa).

The protein belongs to the ATPase alpha/beta chains family.

Functionally, produces ATP from ADP in the presence of a proton gradient across the membrane. The V-type beta chain is a regulatory subunit. The chain is V-type ATP synthase beta chain (atpB) from Chlamydia muridarum (strain MoPn / Nigg).